The primary structure comprises 620 residues: MSFDIAKYPTLALVDSPQELRLLPKESLPKLCDELRRYLLDSVSRSSGHFASGLGTVELTVALHYVYNTPFDQLIWDVGHQAYPHKILTGRRDKIGTIRQKGGLHPFPWRGESEYDVLSVGHSSTSISAGIGIAVAAEKEGKNRRTVCVIGDGAITAGMAFEAMNHAGDIRPDMLVVLNDNEMSISENVGALNNHLAQLLSGKLYSSLREGGKKVFSGVPPIKELLKRTEEHIKGMVVPGTLFEELGFNYIGPVDGHDVLGLITTLKNMRDLKGPQFLHIMTKKGRGYEPAEKDPITFHAVPKFDPSSGCLPKSSGGLPSYSKIFGDWLCETAAKDSKLMAITPAMREGSGMVEFSRKFPDRYFDVAIAEQHAVTFAAGLAIGGYKPIVAIYSTFLQRAYDQVLHDVAIQKLPVLFAIDRAGIVGADGQTHQGAFDLSYLRCIPEMVIMTPSDENECRQMLYTGYHYNDGPSAVRYPRGNAVGVELTPLEKLPIGKGIVKRRGEKLAILNFGTLMPEAAKVAESLNATLVDMRFVKPLDEALILEMAASHEALITIEENAIMGGAGSGVNEVLMAHRKPVPVLNIGLPDFFIPQGTQEEMRAELGLDAAGMEAKIKAWLA.

Thiamine diphosphate-binding positions include histidine 80 and 121-123; that span reads GHS. Mg(2+) is bound at residue aspartate 152. Residues 153-154, asparagine 181, tyrosine 288, and glutamate 370 each bind thiamine diphosphate; that span reads GA. Asparagine 181 contacts Mg(2+).

The protein belongs to the transketolase family. DXPS subfamily. Homodimer. Mg(2+) is required as a cofactor. The cofactor is thiamine diphosphate.

The catalysed reaction is D-glyceraldehyde 3-phosphate + pyruvate + H(+) = 1-deoxy-D-xylulose 5-phosphate + CO2. The protein operates within metabolic intermediate biosynthesis; 1-deoxy-D-xylulose 5-phosphate biosynthesis; 1-deoxy-D-xylulose 5-phosphate from D-glyceraldehyde 3-phosphate and pyruvate: step 1/1. Functionally, catalyzes the acyloin condensation reaction between C atoms 2 and 3 of pyruvate and glyceraldehyde 3-phosphate to yield 1-deoxy-D-xylulose-5-phosphate (DXP). This is 1-deoxy-D-xylulose-5-phosphate synthase from Escherichia fergusonii (strain ATCC 35469 / DSM 13698 / CCUG 18766 / IAM 14443 / JCM 21226 / LMG 7866 / NBRC 102419 / NCTC 12128 / CDC 0568-73).